Consider the following 60-residue polypeptide: Large ribosomal subunit protein uL30 (60 aa).

It belongs to the universal ribosomal protein uL30 family. In terms of assembly, part of the 50S ribosomal subunit.

The sequence is that of Large ribosomal subunit protein uL30 from Flavobacterium psychrophilum (strain ATCC 49511 / DSM 21280 / CIP 103535 / JIP02/86).